The chain runs to 84 residues: Small ribosomal subunit protein bS16c (84 aa).

The protein belongs to the bacterial ribosomal protein bS16 family.

Its subcellular location is the plastid. It localises to the chloroplast. This is Small ribosomal subunit protein bS16c from Anthoceros angustus (Hornwort).